The sequence spans 130 residues: Small ribosomal subunit protein uS8 (130 aa).

It belongs to the universal ribosomal protein uS8 family. Part of the 30S ribosomal subunit. Contacts proteins S5 and S12.

Its function is as follows. One of the primary rRNA binding proteins, it binds directly to 16S rRNA central domain where it helps coordinate assembly of the platform of the 30S subunit. This is Small ribosomal subunit protein uS8 from Actinobacillus pleuropneumoniae serotype 5b (strain L20).